We begin with the raw amino-acid sequence, 181 residues long: ADP-ribosylation factor 1 (181 aa).

G2 carries the N-myristoyl glycine lipid modification. GTP is bound by residues 24-31 (GLDAAGKT), 67-71 (DVGGQ), and 126-129 (NKQD).

The protein belongs to the small GTPase superfamily. Arf family. As to expression, seedling shoots.

Its subcellular location is the golgi apparatus. The catalysed reaction is GTP + H2O = GDP + phosphate + H(+). Functionally, GTP-binding protein involved in protein trafficking; may modulate vesicle budding and uncoating within the Golgi apparatus. In Oryza sativa subsp. japonica (Rice), this protein is ADP-ribosylation factor 1.